Consider the following 117-residue polypeptide: Minor capsid protein p17 (117 aa).

N-linked (GlcNAc...) asparagine; by host glycosylation occurs at Asn12. Residues 39–59 traverse the membrane as a helical segment; it reads AILLGILILLVIILIIVAIVY. The disordered stretch occupies residues 96–117; the sequence is KNSTSQQSHIPSDEQLAELAHS. Residue Asn97 is glycosylated (N-linked (GlcNAc...) asparagine; by host).

This sequence belongs to the asfivirus minor capsid protein p17 family. Interacts with the minor capsid protein M1249L and with the hexon capsid protein p72 capsomers; these interactions form a rigid zipper structure that stabilizes the capsomers. Interacts with host STING1.

It is found in the virion membrane. The protein localises to the host endoplasmic reticulum membrane. Functionally, together with the penton and the other minor capsid proteins (M1249L, p49), forms a complicated network immediately below the outer capsid shell, stabilizing the whole capsid. Three copies of p17 encircle each p72 capsomer in the inner capsid shell, anchoring p72 capsomers on the inner membrane. Required for the assembly of the capsid and icosahedral morphogenesis. Additionally, inhibits the host cGAS-STING pathway through its interaction with STING1 and subsequent interference of the recruitment of downstream components TBK1 and IKBKE. The polypeptide is Minor capsid protein p17 (African swine fever virus (isolate Warthog/Namibia/Wart80/1980) (ASFV)).